A 178-amino-acid chain; its full sequence is MAAGTAAALAFLSQESRTRAGGVGGLRVPAPVTMDSFFFGCELSGHTRSFTFKVEEEDDAEHVLALTMLCLTEGAKDECNVVEVVARNHDHQEIAVPVANLKLSCQPMLSLDDFQLQPPVTFRLKSGSGPVRITGRHQIVTMSNDVSEEESEEEEEDSDEEEVELCPILPAKKQGGRP.

The residue at position 2 (Ala-2) is an N-acetylalanine. Phosphoserine occurs at positions 13 and 16. Arg-27 carries the post-translational modification Omega-N-methylarginine. The segment at 141 to 178 (TMSNDVSEEESEEEEEDSDEEEVELCPILPAKKQGGRP) is disordered. Over residues 146–164 (VSEEESEEEEEDSDEEEVE) the composition is skewed to acidic residues. 3 positions are modified to phosphoserine: Ser-147, Ser-151, and Ser-158.

This sequence belongs to the nucleoplasmin family. As to quaternary structure, interacts with NPM (via N-terminus). Forms a pentamer with NPM at a ratio 4:1 (NPM3/NPM). Two pentamers form a decamer. In terms of processing, phosphorylated. Ubiquitous.

It localises to the nucleus. It is found in the nucleolus. Its function is as follows. Plays a role in the regulation of diverse cellular processes such as ribosome biogenesis, chromatin remodeling or protein chaperoning. Modulates the histone chaperone function and the RNA-binding activity of nucleolar phosphoprotein B23/NPM. Efficiently mediates chromatin remodeling when included in a pentamer containing NPM3 and NPM. This Homo sapiens (Human) protein is Nucleoplasmin-3 (NPM3).